The chain runs to 141 residues: Large ribosomal subunit protein uL13 (141 aa).

It belongs to the universal ribosomal protein uL13 family. As to quaternary structure, part of the 50S ribosomal subunit.

Its function is as follows. This protein is one of the early assembly proteins of the 50S ribosomal subunit, although it is not seen to bind rRNA by itself. It is important during the early stages of 50S assembly. This chain is Large ribosomal subunit protein uL13, found in Helicobacter pylori (strain P12).